Consider the following 880-residue polypeptide: Translation initiation factor IF-2 (880 aa).

Disordered regions lie at residues 51-78, 93-116, and 142-293; these read KQHG…GSTG, YVKR…QAAN, and KEAD…FEKP. Over residues 69–78 the composition is skewed to polar residues; sequence STLNVKGSTG. Positions 142–229 are enriched in basic and acidic residues; that stretch reads KEADEKAKKA…ARKKAAEGGD (88 aa). A compositionally biased stretch (basic residues) spans 269-279; it reads GRRTRRGKKQR. The region spanning 380 to 549 is the tr-type G domain; sequence SRAPVVTIMG…LLQAEMLDLS (170 aa). The G1 stretch occupies residues 389–396; the sequence is GHVDHGKT. 389-396 is a GTP binding site; sequence GHVDHGKT. The segment at 414–418 is G2; sequence GITQH. Residues 435–438 form a G3 region; sequence DTPG. Residues 435 to 439 and 489 to 492 each bind GTP; these read DTPGH and NKID. A G4 region spans residues 489-492; the sequence is NKID. Positions 525-527 are G5; it reads SAK.

This sequence belongs to the TRAFAC class translation factor GTPase superfamily. Classic translation factor GTPase family. IF-2 subfamily.

The protein resides in the cytoplasm. Its function is as follows. One of the essential components for the initiation of protein synthesis. Protects formylmethionyl-tRNA from spontaneous hydrolysis and promotes its binding to the 30S ribosomal subunits. Also involved in the hydrolysis of GTP during the formation of the 70S ribosomal complex. In Psychromonas ingrahamii (strain DSM 17664 / CCUG 51855 / 37), this protein is Translation initiation factor IF-2.